We begin with the raw amino-acid sequence, 481 residues long: Ribulose bisphosphate carboxylase large chain (481 aa).

The propeptide occupies 1-2 (MS). P3 is modified (N-acetylproline). K14 is modified (N6,N6,N6-trimethyllysine). Positions 123 and 173 each coordinate substrate. Catalysis depends on K175, which acts as the Proton acceptor. K177 lines the substrate pocket. Positions 201, 203, and 204 each coordinate Mg(2+). K201 bears the N6-carboxylysine mark. H294 functions as the Proton acceptor in the catalytic mechanism. R295, H327, and S379 together coordinate substrate.

Belongs to the RuBisCO large chain family. Type I subfamily. Heterohexadecamer of 8 large chains and 8 small chains; disulfide-linked. The disulfide link is formed within the large subunit homodimers. It depends on Mg(2+) as a cofactor. In terms of processing, the disulfide bond which can form in the large chain dimeric partners within the hexadecamer appears to be associated with oxidative stress and protein turnover.

The protein localises to the plastid. It catalyses the reaction 2 (2R)-3-phosphoglycerate + 2 H(+) = D-ribulose 1,5-bisphosphate + CO2 + H2O. It carries out the reaction D-ribulose 1,5-bisphosphate + O2 = 2-phosphoglycolate + (2R)-3-phosphoglycerate + 2 H(+). Its function is as follows. RuBisCO catalyzes two reactions: the carboxylation of D-ribulose 1,5-bisphosphate, the primary event in carbon dioxide fixation, as well as the oxidative fragmentation of the pentose substrate in the photorespiration process. Both reactions occur simultaneously and in competition at the same active site. This chain is Ribulose bisphosphate carboxylase large chain, found in Cuscuta sandwichiana (Kauna'oa).